A 434-amino-acid chain; its full sequence is Trigger factor (434 aa).

Positions 160 to 245 (GDKVKMNFVG…LTEVLAANLP (86 aa)) constitute a PPIase FKBP-type domain.

Belongs to the FKBP-type PPIase family. Tig subfamily.

It localises to the cytoplasm. It catalyses the reaction [protein]-peptidylproline (omega=180) = [protein]-peptidylproline (omega=0). In terms of biological role, involved in protein export. Acts as a chaperone by maintaining the newly synthesized protein in an open conformation. Functions as a peptidyl-prolyl cis-trans isomerase. The sequence is that of Trigger factor from Shewanella sp. (strain MR-4).